The chain runs to 282 residues: Bifunctional protein FolD (282 aa).

NADP(+) is bound by residues 165–167 (GAS) and Ile-231.

This sequence belongs to the tetrahydrofolate dehydrogenase/cyclohydrolase family. As to quaternary structure, homodimer.

It carries out the reaction (6R)-5,10-methylene-5,6,7,8-tetrahydrofolate + NADP(+) = (6R)-5,10-methenyltetrahydrofolate + NADPH. The catalysed reaction is (6R)-5,10-methenyltetrahydrofolate + H2O = (6R)-10-formyltetrahydrofolate + H(+). It functions in the pathway one-carbon metabolism; tetrahydrofolate interconversion. Catalyzes the oxidation of 5,10-methylenetetrahydrofolate to 5,10-methenyltetrahydrofolate and then the hydrolysis of 5,10-methenyltetrahydrofolate to 10-formyltetrahydrofolate. The chain is Bifunctional protein FolD from Francisella tularensis subsp. holarctica (strain FTNF002-00 / FTA).